Here is a 379-residue protein sequence, read N- to C-terminus: Pathogen-associated molecular patterns-induced protein A70 (379 aa).

Residues 7–29 (VASFFTPTTLFLLLNLMIGTIVV) form a helical membrane-spanning segment. The N-linked (GlcNAc...) asparagine glycan is linked to Asn-122. Residues 133-154 (TGSDPHSHSHSHLDLHPDPAPA) are disordered. Residues 137–149 (PHSHSHSHLDLHP) are compositionally biased toward basic and acidic residues. Residue Asn-170 is glycosylated (N-linked (GlcNAc...) asparagine). Disordered stretches follow at residues 216 to 238 (PEED…LTRA) and 256 to 347 (SDPD…DGVD). Residues 221–231 (PTGTGVNSQIN) are compositionally biased toward polar residues. Composition is skewed to basic and acidic residues over residues 256–285 (SDPD…ESKK) and 322–335 (SLER…RVER).

The protein resides in the membrane. The polypeptide is Pathogen-associated molecular patterns-induced protein A70 (Arabidopsis thaliana (Mouse-ear cress)).